We begin with the raw amino-acid sequence, 405 residues long: Eukaryotic initiation factor 4A (405 aa).

Residues 32–60 carry the Q motif motif; that stretch reads PTFESMGLREELLRGIFNYGFEKPSAIQQ. A Helicase ATP-binding domain is found at 63-233; that stretch reads ILPIIKGRDT…EKFMTKPVRI (171 aa). 76 to 83 is an ATP binding site; that stretch reads AQSGTGKT. The DEAD box motif lies at 181–184; the sequence is DEAD. The region spanning 244-405 is the Helicase C-terminal domain; it reads GIKQFFVSVE…EMPVNFASII (162 aa).

Belongs to the DEAD box helicase family. eIF4A subfamily.

The protein localises to the cytoplasm. The catalysed reaction is ATP + H2O = ADP + phosphate + H(+). Its function is as follows. ATP-dependent RNA helicase which is a subunit of the eIF4F complex involved in cap recognition and is required for mRNA binding to ribosome. In the current model of translation initiation, eIF4A unwinds RNA secondary structures in the 5'-UTR of mRNAs which is necessary to allow efficient binding of the small ribosomal subunit, and subsequent scanning for the initiator codon. The polypeptide is Eukaryotic initiation factor 4A (tifA) (Dictyostelium discoideum (Social amoeba)).